The following is a 616-amino-acid chain: Dihydroxy-acid dehydratase (616 aa).

Asp-81 is a Mg(2+) binding site. Cys-122 is a binding site for [2Fe-2S] cluster. Mg(2+) is bound by residues Asp-123 and Lys-124. Lys-124 carries the post-translational modification N6-carboxylysine. Cys-196 provides a ligand contact to [2Fe-2S] cluster. Glu-496 provides a ligand contact to Mg(2+). Ser-522 (proton acceptor) is an active-site residue.

The protein belongs to the IlvD/Edd family. As to quaternary structure, homodimer. Requires [2Fe-2S] cluster as cofactor. The cofactor is Mg(2+).

It carries out the reaction (2R)-2,3-dihydroxy-3-methylbutanoate = 3-methyl-2-oxobutanoate + H2O. The catalysed reaction is (2R,3R)-2,3-dihydroxy-3-methylpentanoate = (S)-3-methyl-2-oxopentanoate + H2O. The protein operates within amino-acid biosynthesis; L-isoleucine biosynthesis; L-isoleucine from 2-oxobutanoate: step 3/4. It participates in amino-acid biosynthesis; L-valine biosynthesis; L-valine from pyruvate: step 3/4. Functionally, functions in the biosynthesis of branched-chain amino acids. Catalyzes the dehydration of (2R,3R)-2,3-dihydroxy-3-methylpentanoate (2,3-dihydroxy-3-methylvalerate) into 2-oxo-3-methylpentanoate (2-oxo-3-methylvalerate) and of (2R)-2,3-dihydroxy-3-methylbutanoate (2,3-dihydroxyisovalerate) into 2-oxo-3-methylbutanoate (2-oxoisovalerate), the penultimate precursor to L-isoleucine and L-valine, respectively. In Streptomyces griseus subsp. griseus (strain JCM 4626 / CBS 651.72 / NBRC 13350 / KCC S-0626 / ISP 5235), this protein is Dihydroxy-acid dehydratase.